A 293-amino-acid chain; its full sequence is Glutamine sensor pib2 (293 aa).

Residues 38 to 75 (APTRQATNGTGSVSGSPNSSSNSTPANQGSLPSHTNPQ) form a disordered region. Over residues 44 to 62 (TNGTGSVSGSPNSSSNSTP) the composition is skewed to low complexity. Residues 63–75 (ANQGSLPSHTNPQ) are compositionally biased toward polar residues. Residues 156 to 220 (DVSVCSFPSC…SCVSCFYEYL (65 aa)) form an FYVE-type; degenerate zinc finger. 4 residues coordinate Zn(2+): C178, C181, C212, and C215. Polar residues predominate over residues 242–256 (APQQATTHPPSQPKN). The tract at residues 242–276 (APQQATTHPPSQPKNAVSVPIPKMDSTDSKGELPS) is disordered. S259 is modified (phosphoserine).

As to quaternary structure, interacts with the TORC1 complex when activated by glutamine or cysteine.

It is found in the vacuole membrane. Activated by glutamine. Functionally, functions as an intracellular glutamine sensor that directly activates the TORC1 signaling pathway, to promote cell growth when glutamine is available. This Schizosaccharomyces pombe (strain 972 / ATCC 24843) (Fission yeast) protein is Glutamine sensor pib2.